The sequence spans 428 residues: MAGAASALFLLDIKGRVLVWRDYRGDVTAAQAERFFTKLIETEGDSQSNDPVAYDNGVTYMFVQHSNIYLMIASRQNCNAASLLFFLHRVVDVFKHYFEELEEESLRDNFVVVYELLDEMMDFGYPQFTEARILSEFIKTDAYRMEVTQRPPMAVTNSVSWRSEGLKFKKNEVFLDVIESVNILVNSNGQIVRSDVVGALKMRTYLSGMPECKLGLNDRILLEAQGRAIKGKAIDLEDIKFHQCVRLARFENDRTISFIPPDGSFDLMTYRLSTQVKPLIWVEAHIERHSRSRVEMLVKARSQFKDRSYATSVEIELPVPTDAYNPDVRTSLGSAAYAPEKDALVWKIQYFYGNKEHTLKADFHLPSIAAEEATPERKAPIRVKFEIPKFIVSGIQVRYLKIIEKSGYQAHPWVRYITMAGEYELRLM.

The MHD domain occupies 170–426; the sequence is KNEVFLDVIE…ITMAGEYELR (257 aa).

The protein belongs to the adaptor complexes medium subunit family. Adaptor protein complex 1 (AP-1) is a heterotetramer composed of two large adaptins (gamma-type subunit and beta-type subunit), a medium adaptin (mu-type subunit) and a small adaptin (sigma-type subunit).

The protein resides in the golgi apparatus. The protein localises to the cytoplasmic vesicle. It is found in the clathrin-coated vesicle membrane. In terms of biological role, subunit of clathrin-associated adaptor protein complex 1 that plays a role in protein sorting at the trans-Golgi network and early endosomes (TGN/EE). The AP complexes mediate the recruitment of clathrin to membranes and the recognition of sorting signals within the cytosolic tails of transmembrane cargo molecules. Functions redundantly with AP1M2 in multiple post-Golgi trafficking pathways leading from the TGN to the vacuole, the plasma membrane, and the cell-division plane. This is AP-1 complex subunit mu-1 (AP1M1) from Arabidopsis thaliana (Mouse-ear cress).